The following is a 175-amino-acid chain: 3-hydroxydecanoyl-[acyl-carrier-protein] dehydratase (175 aa).

Histidine 71 is an active-site residue.

Belongs to the thioester dehydratase family. FabA subfamily. As to quaternary structure, homodimer.

The protein localises to the cytoplasm. It catalyses the reaction a (3R)-hydroxyacyl-[ACP] = a (2E)-enoyl-[ACP] + H2O. The catalysed reaction is (3R)-hydroxydecanoyl-[ACP] = (2E)-decenoyl-[ACP] + H2O. The enzyme catalyses (2E)-decenoyl-[ACP] = (3Z)-decenoyl-[ACP]. It functions in the pathway lipid metabolism; fatty acid biosynthesis. Functionally, necessary for the introduction of cis unsaturation into fatty acids. Catalyzes the dehydration of (3R)-3-hydroxydecanoyl-ACP to E-(2)-decenoyl-ACP and then its isomerization to Z-(3)-decenoyl-ACP. Can catalyze the dehydratase reaction for beta-hydroxyacyl-ACPs with saturated chain lengths up to 16:0, being most active on intermediate chain length. The sequence is that of 3-hydroxydecanoyl-[acyl-carrier-protein] dehydratase from Rhodopseudomonas palustris (strain ATCC BAA-98 / CGA009).